The sequence spans 2430 residues: DNA-directed RNA polymerase subunit beta'' (2430 aa).

Cysteine 336, cysteine 455, cysteine 462, and cysteine 465 together coordinate Zn(2+).

This sequence belongs to the RNA polymerase beta' chain family. RpoC2 subfamily. As to quaternary structure, in plastids the minimal PEP RNA polymerase catalytic core is composed of four subunits: alpha, beta, beta', and beta''. When a (nuclear-encoded) sigma factor is associated with the core the holoenzyme is formed, which can initiate transcription. Requires Zn(2+) as cofactor.

It localises to the plastid. The protein resides in the chloroplast. It carries out the reaction RNA(n) + a ribonucleoside 5'-triphosphate = RNA(n+1) + diphosphate. In terms of biological role, DNA-dependent RNA polymerase catalyzes the transcription of DNA into RNA using the four ribonucleoside triphosphates as substrates. The sequence is that of DNA-directed RNA polymerase subunit beta'' from Stigeoclonium helveticum (Green alga).